The primary structure comprises 484 residues: uncharacterized protein (484 aa).

It to M.thermoautotrophicum MTH1153.

This is an uncharacterized protein from Methanocaldococcus jannaschii (strain ATCC 43067 / DSM 2661 / JAL-1 / JCM 10045 / NBRC 100440) (Methanococcus jannaschii).